The primary structure comprises 783 residues: Protein transport protein SEC23 B (783 aa).

Zn(2+)-binding residues include Cys59, Cys62, Cys81, and Cys84. The zinc finger-like stretch occupies residues 59 to 84 (CRICTAALNPFARVDFLAKIWICPIC).

The protein belongs to the SEC23/SEC24 family. SEC23 subfamily. In terms of assembly, component of the coat protein complex II (COPII), composed of at least five proteins: the Sec23/24 complex, the Sec13/31 complex and Sar1. Interacts with SEC24A.

It localises to the cytoplasmic vesicle. Its subcellular location is the COPII-coated vesicle membrane. It is found in the endoplasmic reticulum membrane. The protein localises to the membrane. Functionally, component of the coat protein complex II (COPII) which promotes the formation of transport vesicles from the endoplasmic reticulum (ER). The coat has two main functions, the physical deformation of the endoplasmic reticulum membrane into vesicles and the selection of cargo molecules. In Arabidopsis thaliana (Mouse-ear cress), this protein is Protein transport protein SEC23 B.